Reading from the N-terminus, the 198-residue chain is Putative coiled-coil domain-containing protein 196 (198 aa).

Positions 24–117 (NYLKELNEDL…RKEMEMLWNK (94 aa)) form a coiled coil. Composition is skewed to basic and acidic residues over residues 135–144 (NKTDLQDGKA) and 154–167 (TKNELETLCAEKGK). Positions 135 to 198 (NKTDLQDGKA…VSGTSQHHSE (64 aa)) are disordered. Over residues 187–198 (GQVSGTSQHHSE) the composition is skewed to polar residues.

This chain is Putative coiled-coil domain-containing protein 196, found in Bos taurus (Bovine).